A 372-amino-acid polypeptide reads, in one-letter code: Aminomethyltransferase (372 aa).

The protein belongs to the GcvT family. The glycine cleavage system is composed of four proteins: P, T, L and H.

It carries out the reaction N(6)-[(R)-S(8)-aminomethyldihydrolipoyl]-L-lysyl-[protein] + (6S)-5,6,7,8-tetrahydrofolate = N(6)-[(R)-dihydrolipoyl]-L-lysyl-[protein] + (6R)-5,10-methylene-5,6,7,8-tetrahydrofolate + NH4(+). Functionally, the glycine cleavage system catalyzes the degradation of glycine. The chain is Aminomethyltransferase from Burkholderia ambifaria (strain MC40-6).